We begin with the raw amino-acid sequence, 148 residues long: MGKSTFLQDFKAFAMKGNVIDMAVGVVIGGAFGKIVSSLVANVIMPPIGLLVGGVNFTDLKWVMKAAEVGADGKEIAPAVSLDYGQFLQATFDFLIIAFAIFLFIRLITKLTTKKAAEEAPAAPPAPPAPTKEEVLLTEIRDLLKEKK.

A run of 2 helical transmembrane segments spans residues 12–32 (AFAM…GGAF) and 85–105 (GQFL…FLFI).

The protein belongs to the MscL family. In terms of assembly, homopentamer.

It is found in the cell inner membrane. Its function is as follows. Channel that opens in response to stretch forces in the membrane lipid bilayer. May participate in the regulation of osmotic pressure changes within the cell. This is Large-conductance mechanosensitive channel from Bacteroides thetaiotaomicron (strain ATCC 29148 / DSM 2079 / JCM 5827 / CCUG 10774 / NCTC 10582 / VPI-5482 / E50).